Consider the following 150-residue polypeptide: uncharacterized protein (150 aa).

An HTH asnC-type domain is found at 5-66 (LDKVDRRLLE…KPNYKKLNLG (62 aa)). The H-T-H motif DNA-binding region spans 24-43 (IATLSKKLGIPRTTVHYRIK).

This is an uncharacterized protein from Pyrococcus horikoshii (strain ATCC 700860 / DSM 12428 / JCM 9974 / NBRC 100139 / OT-3).